The chain runs to 742 residues: Synaptic vesicle glycoprotein 2A (742 aa).

The interaction with SYT1 stretch occupies residues 1–57 (MEEGFRDRAAFIRGAKDIAKEVKKHAAKKVVKGLDRVQDEYSRRSYSRFEEEDDDDD). The Cytoplasmic segment spans residues 1 to 169 (MEEGFRDRAA…GHGRFQWTLY (169 aa)). A compositionally biased stretch (basic and acidic residues) spans 33–49 (GLDRVQDEYSRRSYSRF). Residues 33-144 (GLDRVQDEYS…GRGEAQRRKE (112 aa)) are disordered. Ser-80 and Ser-81 each carry phosphoserine. A Phosphothreonine modification is found at Thr-84. The span at 122 to 137 (VRGGLSDGEGPPGGRG) shows a compositional bias: gly residues. Position 127 is a phosphoserine (Ser-127). The helical transmembrane segment at 170–190 (FVLGLALMADGVEVFVVGFVL) threads the bilayer. Residues 191 to 205 (PSAEKDMCLSDSNKG) lie on the Extracellular side of the membrane. Residues 206–226 (MLGLIVYLGMMVGAFLWGGLA) form a helical membrane-spanning segment. The Cytoplasmic segment spans residues 227–233 (DRLGRRQ). Residues 234–254 (CLLISLSVNSVFAFFSSFVQG) traverse the membrane as a helical segment. The Extracellular segment spans residues 255–262 (YGTFLFCR). A helical transmembrane segment spans residues 263 to 283 (LLSGVGIGGSIPIVFSYFSEF). Residues 284–294 (LAQEKRGEHLS) are Cytoplasmic-facing. Residues 295–315 (WLCMFWMIGGVYAAAMAWAII) traverse the membrane as a helical segment. The Extracellular segment spans residues 316 to 334 (PHYGWSFQMGSAYQFHSWR). Residues 335 to 355 (VFVLVCAFPSVFAIGALTTQP) traverse the membrane as a helical segment. Residues 356-447 (ESPRFFLENG…CFGPEYRRIT (92 aa)) lie on the Cytoplasmic side of the membrane. Ser-393 is modified (phosphoserine). A helical transmembrane segment spans residues 448-468 (LMMMGVWFTMSFSYYGLTVWF). Residues 469-598 (PDMIRHLQAV…GTGEGAYMVY (130 aa)) are Extracellular-facing. A Phosphotyrosine modification is found at Tyr-480. 3 N-linked (GlcNAc...) asparagine glycosylation sites follow: Asn-498, Asn-548, and Asn-573. Residues 599-619 (FVSFLGTLAVLPGNIVSALLM) form a helical membrane-spanning segment. Over 620–626 (DKIGRLR) the chain is Cytoplasmic. A helical transmembrane segment spans residues 627–647 (MLAGSSVMSCVSCFFLSFGNS). Residues 648 to 651 (ESAM) are Extracellular-facing. Residues 652 to 672 (IALLCLFGGVSIASWNALDVL) traverse the membrane as a helical segment. Topologically, residues 673–685 (TVELYPSDKRTTA) are cytoplasmic. The helical transmembrane segment at 686 to 708 (FGFLNALCKLAAVLGISIFTSFV) threads the bilayer. Residues 709–712 (GITK) are Extracellular-facing. A helical transmembrane segment spans residues 713 to 731 (AAPILFASAALALGSSLAL). Residues 732-742 (KLPETRGQVLQ) lie on the Cytoplasmic side of the membrane.

This sequence belongs to the major facilitator superfamily. In terms of assembly, interacts with SYT1/synaptotagmin-1 in a calcium-dependent manner. Binds the adapter protein complex AP-2. As to quaternary structure, (Microbial infection) Interacts with C.botulinum neurotoxin type A2 (BoNT/A, botA). Interaction is improved by glycosylation of SV2. Post-translationally, phosphorylation by CK1 of the N-terminal cytoplasmic domain regulates interaction with SYT1. N-glycosylated.

Its subcellular location is the presynapse. It is found in the cytoplasmic vesicle. The protein localises to the secretory vesicle. The protein resides in the synaptic vesicle membrane. Functionally, plays a role in the control of regulated secretion in neural and endocrine cells, enhancing selectively low-frequency neurotransmission. Positively regulates vesicle fusion by maintaining the readily releasable pool of secretory vesicles. Its function is as follows. (Microbial infection) Receptor for the C.botulinum neurotoxin type A2 (BoNT/A, botA); glycosylation is not essential but enhances the interaction. Probably also serves as a receptor for the closely related C.botulinum neurotoxin type A1. The chain is Synaptic vesicle glycoprotein 2A (SV2A) from Homo sapiens (Human).